The chain runs to 297 residues: MKRVRCNKVRTVTEVKPNNAKIRKTYDLNEFDLKNLSSLESFENTKVKLALSKYMAMINTLEMTQPLLEVFRNRADTRQIVAVVQATMGFVHNRFNPLVTHFTNKMEFVTTETAETIIPGEPILFTENDGALLCAIDRPSIVKMLSREFDLSVAAEPQTSNREVLVAKTLVSNKRKRRSSNDEGYEFIKRPRTFSEYNQCMDALSDFNVTEIETTQYLLLLLIVEHAYLHYYIFKNYGALEYSKSLMDHSLFVNKLRSSTNAKMHNLLLSKFRFTVEESDKTSSGTTSKFTVYNFNK.

Belongs to the baculoviridae E27 family. Interacts with host mus209/PCNA, cdc2 and cdk6.

The protein localises to the virion membrane. In terms of biological role, acts as a cyclin-like protein and plays a role in the modulation of host cell cycle. May promote G2/S arrest by interacting with host mus209/PCNA, cdc2 and cdk6. The cell cycle arrest is characterized by an intact nuclear envelope, concomitant with sustained activity of host cdc2. However, viral DNA replication still occurs in the arrested cells. In Orgyia pseudotsugata multicapsid polyhedrosis virus (OpMNPV), this protein is Occlusion-derived virus envelope protein E27.